The sequence spans 252 residues: 3-dehydroquinate dehydratase (252 aa).

3-dehydroquinate contacts are provided by residues 46–48 (EWR) and Arg-82. The active-site Proton donor/acceptor is the His-143. Lys-170 functions as the Schiff-base intermediate with substrate in the catalytic mechanism. Arg-212, Ser-231, and Gln-235 together coordinate 3-dehydroquinate.

The protein belongs to the type-I 3-dehydroquinase family. As to quaternary structure, homodimer.

It catalyses the reaction 3-dehydroquinate = 3-dehydroshikimate + H2O. It functions in the pathway metabolic intermediate biosynthesis; chorismate biosynthesis; chorismate from D-erythrose 4-phosphate and phosphoenolpyruvate: step 3/7. Its function is as follows. Involved in the third step of the chorismate pathway, which leads to the biosynthesis of aromatic amino acids. Catalyzes the cis-dehydration of 3-dehydroquinate (DHQ) and introduces the first double bond of the aromatic ring to yield 3-dehydroshikimate. The sequence is that of 3-dehydroquinate dehydratase from Listeria welshimeri serovar 6b (strain ATCC 35897 / DSM 20650 / CCUG 15529 / CIP 8149 / NCTC 11857 / SLCC 5334 / V8).